The chain runs to 371 residues: Phospho-N-acetylmuramoyl-pentapeptide-transferase (371 aa).

The next 9 helical transmembrane spans lie at 25–45 (TLLA…WLIA), 77–94 (MGGL…ALWA), 136–156 (IGWQ…HPAS), 172–192 (LIPH…IVGF), 204–224 (GLAI…AYVA), 240–260 (GTGE…AFLW), 269–289 (FMGD…AFMI), 296–316 (VIVG…VGVF), and 348–368 (KVVL…LATL).

This sequence belongs to the glycosyltransferase 4 family. MraY subfamily. It depends on Mg(2+) as a cofactor.

The protein resides in the cell inner membrane. It catalyses the reaction UDP-N-acetyl-alpha-D-muramoyl-L-alanyl-gamma-D-glutamyl-meso-2,6-diaminopimeloyl-D-alanyl-D-alanine + di-trans,octa-cis-undecaprenyl phosphate = di-trans,octa-cis-undecaprenyl diphospho-N-acetyl-alpha-D-muramoyl-L-alanyl-D-glutamyl-meso-2,6-diaminopimeloyl-D-alanyl-D-alanine + UMP. It participates in cell wall biogenesis; peptidoglycan biosynthesis. Catalyzes the initial step of the lipid cycle reactions in the biosynthesis of the cell wall peptidoglycan: transfers peptidoglycan precursor phospho-MurNAc-pentapeptide from UDP-MurNAc-pentapeptide onto the lipid carrier undecaprenyl phosphate, yielding undecaprenyl-pyrophosphoryl-MurNAc-pentapeptide, known as lipid I. The polypeptide is Phospho-N-acetylmuramoyl-pentapeptide-transferase (Opitutus terrae (strain DSM 11246 / JCM 15787 / PB90-1)).